The sequence spans 183 residues: Dual-action ribosomal maturation protein DarP (183 aa).

The protein belongs to the DarP family.

Its subcellular location is the cytoplasm. Member of a network of 50S ribosomal subunit biogenesis factors which assembles along the 30S-50S interface, preventing incorrect 23S rRNA structures from forming. Promotes peptidyl transferase center (PTC) maturation. The protein is Dual-action ribosomal maturation protein DarP of Shigella boydii serotype 18 (strain CDC 3083-94 / BS512).